The chain runs to 499 residues: Zinc finger protein PLAG1 (499 aa).

The interval 1–33 is disordered; sequence MATVIPGDLSEVRDTQKAPSGKRKRGESKPRKN. Residues 2 to 84 form an interaction with KPNA2 region; sequence ATVIPGDLSE…SKYKLQRHMA (83 aa). The Nuclear localization signal motif lies at 22-25; it reads KRKR. 7 C2H2-type zinc fingers span residues 34–56, 62–86, 92–114, 121–143, 150–172, 185–207, and 213–236; these read FPCQ…SFSH, YKCT…MATH, HKCN…LHTH, FKCE…LALH, LTCK…LKSH, HQCE…MVVH, and FLCQ…KKSH. A decreased nuclear import with localization in the nucleus but also in the cytoplasm region spans residues 41 to 242; it reads KAFNSVEKLK…KKSHNQELLK (202 aa). Residues 243-383 are repression domain; contains 3 sumoylation motifs and massively decrease transcription activity; sequence VKTEPVDFLD…SPASSSKLGL (141 aa). Residues 243 to 499 form an activates transcription; Inhibition of nuclear import due to lack of NLS and KPNA2 interaction region; that stretch reads VKTEPVDFLD…TLPRFHQAFQ (257 aa). Glycyl lysine isopeptide (Lys-Gly) (interchain with G-Cter in SUMO) cross-links involve residues Lys-244 and Lys-263. Residues 365–379 are compositionally biased toward low complexity; it reads GGAPSSSQDSPASSS. Residues 365–400 are disordered; sequence GGAPSSSQDSPASSSKLGLEPQSGSPDDGAGDLSLS. The tract at residues 384 to 499 is massively activates transcription; that stretch reads EPQSGSPDDG…TLPRFHQAFQ (116 aa).

Belongs to the krueppel C2H2-type zinc-finger protein family. Interacts with KPNA2, which escorts protein to the nucleus via interaction with nuclear localization signal. Interacts with E3 SUMO-protein ligase PIAS1, PIAS2 and PIAS4. Sumoylated with SUMO1; which inhibits transcriptional activity, but does not affect nuclear localization. Blockers of sumoylation pathway such as SENP3 and inactive UBE2I increases transcriptional capacity. Sumoylation is increased in the presence of PIAS1. Post-translationally, acetylated by lysine acetyltransferase EP300; which activates transcriptional capacity. Lysine residues that are sumoylated also seem to be target for acetylation. In terms of tissue distribution, expressed in heart, spleen, lung, kidney, brain, testis and epididymis but not in salivary glands.

Its subcellular location is the nucleus. Its function is as follows. Transcription factor whose activation results in up-regulation of target genes, such as IGFII, leading to uncontrolled cell proliferation: when overexpressed in cultured cells, higher proliferation rate and transformation are observed. Other target genes such as CRLF1, CRABP2, CRIP2, PIGF are strongly induced in cells with PLAG1 induction. Proto-oncogene whose ectopic expression can trigger the development of pleomorphic adenomas of the salivary gland and lipoblastomas. Cooperates with CBFB-MYH11. The chain is Zinc finger protein PLAG1 (Plag1) from Mus musculus (Mouse).